Consider the following 100-residue polypeptide: Integration host factor subunit alpha (100 aa).

It belongs to the bacterial histone-like protein family. Heterodimer of an alpha and a beta chain.

In terms of biological role, this protein is one of the two subunits of integration host factor, a specific DNA-binding protein that functions in genetic recombination as well as in transcriptional and translational control. Involved in hydrogenase gene expression. The chain is Integration host factor subunit alpha (ihfA) from Rhodobacter capsulatus (Rhodopseudomonas capsulata).